The chain runs to 545 residues: Periplasmic trehalase (545 aa).

The signal sequence occupies residues 1-30; the sequence is MPDRTALPRAMLAAWVLLLLAACSQGPAPT. Substrate is bound by residues arginine 160, 167–168, asparagine 204, 213–215, 285–287, and glycine 318; these read WD, RSQ, and RQE. Active-site proton donor/acceptor residues include aspartate 320 and glutamate 503. Glutamate 518 serves as a coordination point for substrate.

Belongs to the glycosyl hydrolase 37 family.

It is found in the periplasm. The enzyme catalyses alpha,alpha-trehalose + H2O = alpha-D-glucose + beta-D-glucose. Provides the cells with the ability to utilize trehalose at high osmolarity by splitting it into glucose molecules that can subsequently be taken up by the phosphotransferase-mediated uptake system. In Pseudomonas aeruginosa (strain ATCC 15692 / DSM 22644 / CIP 104116 / JCM 14847 / LMG 12228 / 1C / PRS 101 / PAO1), this protein is Periplasmic trehalase.